The primary structure comprises 166 residues: Large ribosomal subunit protein bL19 (166 aa).

This sequence belongs to the bacterial ribosomal protein bL19 family. In terms of assembly, part of the 50S ribosomal subunit. Forms a cluster with proteins L3 and L14.

Its function is as follows. This protein is located at the 30S-50S ribosomal subunit interface and may play a role in the structure and function of the aminoacyl-tRNA binding site. Binds the 23S rRNA. The chain is Large ribosomal subunit protein bL19 (rplS) from Deinococcus radiodurans (strain ATCC 13939 / DSM 20539 / JCM 16871 / CCUG 27074 / LMG 4051 / NBRC 15346 / NCIMB 9279 / VKM B-1422 / R1).